The chain runs to 179 residues: tRNA-splicing endonuclease (179 aa).

Catalysis depends on residues Y115, H123, and K154.

This sequence belongs to the tRNA-intron endonuclease family. Archaeal short subfamily. As to quaternary structure, homotetramer; although the tetramer contains four active sites, only two participate in the cleavage. Therefore, it should be considered as a dimer of dimers.

The enzyme catalyses pretRNA = a 3'-half-tRNA molecule with a 5'-OH end + a 5'-half-tRNA molecule with a 2',3'-cyclic phosphate end + an intron with a 2',3'-cyclic phosphate and a 5'-hydroxyl terminus.. Endonuclease that removes tRNA introns. Cleaves pre-tRNA at the 5'- and 3'-splice sites to release the intron. The products are an intron and two tRNA half-molecules bearing 2',3' cyclic phosphate and 5'-OH termini. Recognizes a pseudosymmetric substrate in which 2 bulged loops of 3 bases are separated by a stem of 4 bp. The chain is tRNA-splicing endonuclease from Methanopyrus kandleri (strain AV19 / DSM 6324 / JCM 9639 / NBRC 100938).